We begin with the raw amino-acid sequence, 142 residues long: Hemoglobin subunit beta-C (142 aa).

Residues 1-142 (MPNKALITGF…VASALAHRYH (142 aa)) form the Globin domain. His59 and His88 together coordinate heme b.

Belongs to the globin family. In terms of assembly, heterotetramer of two alpha chains and two beta chains. As to expression, red blood cells.

Its function is as follows. Involved in oxygen transport from the lung to the various peripheral tissues. This Capra hircus (Goat) protein is Hemoglobin subunit beta-C (HBBC).